We begin with the raw amino-acid sequence, 151 residues long: Large ribosomal subunit protein bL9 (151 aa).

The protein belongs to the bacterial ribosomal protein bL9 family.

Binds to the 23S rRNA. The protein is Large ribosomal subunit protein bL9 of Oenococcus oeni (strain ATCC BAA-331 / PSU-1).